We begin with the raw amino-acid sequence, 624 residues long: Ubiquilin-2 (624 aa).

Disordered regions lie at residues 1–32 (MAEN…EPKI) and 106–141 (NRPQ…TNSN). N-acetylalanine is present on Ala2. Residues 15–32 (RGPAAAQGSAAAPAEPKI) are compositionally biased toward low complexity. A Ubiquitin-like domain is found at 33–107 (IKVTVKTPKE…VHLVIKSQNR (75 aa)). The span at 106-115 (NRPQGQSTQP) shows a compositional bias: polar residues. Over residues 116-141 (SNAAGTNTTSASTPRSNSTPISTNSN) the composition is skewed to low complexity. STI1 domains lie at 178-206 (SPEM…QLIM) and 208-247 (NPQM…MQEM). The interval 287–349 (FGGNPFASVG…SGSGNSSSNA (63 aa)) is disordered. The segment covering 294–304 (SVGSSSSSGEG) has biased composition (low complexity). The segment covering 316 to 325 (LPNPWAPPPA) has biased composition (pro residues). Residues 326–349 (TQSSATTSTTTSTGSGSGNSSSNA) are compositionally biased toward low complexity. STI1 domains are found at residues 379-426 (NPQL…QEQM) and 430-462 (LPAF…QQGL). 12 consecutive repeat copies span residues 491 to 493 (PVG), 494 to 496 (PVT), 497 to 499 (PIG), 500 to 502 (PIG), 503 to 505 (PIV), 506 to 508 (PFT), 509 to 511 (PIG), 512 to 514 (PIG), 515 to 517 (PIG), 518 to 520 (PTG), 521 to 523 (PAA), and 524 to 526 (PPG). The 12 X 3 AA tandem repeats of P-X-X stretch occupies residues 491–526 (PVGPVTPIGPIGPIVPFTPIGPIGPIGPTGPAAPPG). The disordered stretch occupies residues 512-556 (PIGPIGPTGPAAPPGSTGSGGPTGPTVSSAAPSETTSPTSESGPN). A compositionally biased stretch (low complexity) spans 535 to 553 (GPTVSSAAPSETTSPTSES). Positions 581–621 (RFQQQLEQLNAMGFLNREANLQALIATGGDINAAIERLLGS) constitute a UBA domain.

As to quaternary structure, homodimer. Forms heterodimer with UBQLN1. Binds UBE3A and BTRC. Interacts with the 19S proteasome subunit. Interacts with C9orf72. Interacts with HNRNPA1 and HNRNPU. Found in a complex with UBQLN1 and MAP1LC3A/B/C. Interacts with EPS15, EPN1 and EPN2. Interacts with HERPUD1. Interacts with RAD23A. Interacts with TARDBP. Interacts (via C-terminus) with FAF2 (via N-terminus). Interacts with UBQLN4. Binds CD47. Degraded during macroautophagy.

It is found in the cytoplasm. Its subcellular location is the nucleus. It localises to the membrane. The protein localises to the cytoplasmic vesicle. The protein resides in the autophagosome. Its function is as follows. Plays an important role in the regulation of different protein degradation mechanisms and pathways including ubiquitin-proteasome system (UPS), autophagy and the endoplasmic reticulum-associated protein degradation (ERAD) pathway. Mediates the proteasomal targeting of misfolded or accumulated proteins for degradation by binding (via UBA domain) to their polyubiquitin chains and by interacting (via ubiquitin-like domain) with the subunits of the proteasome. Plays a role in the ERAD pathway via its interaction with ER-localized proteins FAF2/UBXD8 and HERPUD1 and may form a link between the polyubiquitinated ERAD substrates and the proteasome. Involved in the regulation of macroautophagy and autophagosome formation; required for maturation of autophagy-related protein LC3 from the cytosolic form LC3-I to the membrane-bound form LC3-II and may assist in the maturation of autophagosomes to autolysosomes by mediating autophagosome-lysosome fusion. Negatively regulates the endocytosis of GPCR receptors: AVPR2 and ADRB2, by specifically reducing the rate at which receptor-arrestin complexes concentrate in clathrin-coated pits (CCPs). In Homo sapiens (Human), this protein is Ubiquilin-2 (UBQLN2).